We begin with the raw amino-acid sequence, 311 residues long: Probable manganese-dependent inorganic pyrophosphatase (311 aa).

Mn(2+) is bound by residues His-9, Asp-13, Asp-15, Asp-77, His-99, and Asp-151.

It belongs to the PPase class C family. Requires Mn(2+) as cofactor.

Its subcellular location is the cytoplasm. It catalyses the reaction diphosphate + H2O = 2 phosphate + H(+). The polypeptide is Probable manganese-dependent inorganic pyrophosphatase (Streptococcus equi subsp. equi (strain 4047)).